The chain runs to 499 residues: UDP-N-acetylmuramoylalanine--D-glutamate ligase (499 aa).

120–126 (GTNGKTT) contacts ATP.

This sequence belongs to the MurCDEF family.

The protein localises to the cytoplasm. The enzyme catalyses UDP-N-acetyl-alpha-D-muramoyl-L-alanine + D-glutamate + ATP = UDP-N-acetyl-alpha-D-muramoyl-L-alanyl-D-glutamate + ADP + phosphate + H(+). Its pathway is cell wall biogenesis; peptidoglycan biosynthesis. Cell wall formation. Catalyzes the addition of glutamate to the nucleotide precursor UDP-N-acetylmuramoyl-L-alanine (UMA). The protein is UDP-N-acetylmuramoylalanine--D-glutamate ligase of Nostoc punctiforme (strain ATCC 29133 / PCC 73102).